We begin with the raw amino-acid sequence, 706 residues long: Catalase HPII (706 aa).

Active-site residues include histidine 77 and asparagine 151. Residue tyrosine 365 participates in heme binding. The tract at residues 512-532 (EPPEEQVDESAPVSPALSQVT) is disordered.

The protein belongs to the catalase family. HPII subfamily. Heme is required as a cofactor.

Its subcellular location is the cytoplasm. The enzyme catalyses 2 H2O2 = O2 + 2 H2O. In terms of biological role, decomposes hydrogen peroxide into water and oxygen; serves to protect cells from the toxic effects of hydrogen peroxide. This is Catalase HPII (katE) from Mycobacterium avium.